The primary structure comprises 691 residues: Lipase 2 (691 aa).

The signal sequence occupies residues 1–37 (MLRGQEERKYSIRKYSIGVVSVLAATMFVVSSHEAQA). Polar residues predominate over residues 34–72 (EAQASEKTPTSNAAAQKETLNQPGEQGNAITSHQMQSGK). Positions 34–267 (EAQASEKTPT…KPTDKNTDNK (234 aa)) are disordered. The propeptide occupies 38–296 (SEKTPTSNAA…ADAKKVRPLK (259 aa)). A compositionally biased stretch (basic and acidic residues) spans 73-82 (QLDDMHKENG). Polar residues-rich tracts occupy residues 83 to 115 (KSGT…NDNQ), 125 to 172 (SKQS…QPSI), and 186 to 207 (PTST…AQDA). Basic and acidic residues-rich tracts occupy residues 226–238 (IDAK…RQSE) and 258–267 (KPTDKNTDNK). The active-site Nucleophile is S413. Position 580 (G580) interacts with Ca(2+). Residue D604 is the Charge relay system of the active site. D645 is a Ca(2+) binding site. H646 serves as the catalytic Charge relay system. Ca(2+)-binding residues include D648, D653, and D656.

It belongs to the AB hydrolase superfamily. Lipase family.

Its subcellular location is the secreted. It catalyses the reaction a triacylglycerol + H2O = a diacylglycerol + a fatty acid + H(+). The chain is Lipase 2 (lip2) from Staphylococcus aureus (strain Mu50 / ATCC 700699).